The following is a 370-amino-acid chain: MFYYLYDLYFNHLDSLRIFSYVTFRALMAGLTSMFVTFWLGHKVIDFLYGLKFRESVRDDGPKSHESKKGTPTMGGLLIIGSLLLSVLLWGNLKNSNIIVLSVFALCFSALGFADDYMKSVKKIKGGMKARTKFLLSILISLVFCILFFYYTGVIPTGHSGKIPFQITDLFFPFVKGPVLALGVFAIPFSILVIIGSSHAVNLTDGLDGLATGTVAISVVTLGIIAYVSGTPITANYLNIPYLPGAHEYSVFLSALAGALFGFLWFNAHPAQVFMGDTGSLFLGATLGMIVILLKKEILLLILGAIFVSEALSVILQVGSFKLTGKRIFKMAPLHHHFELGGVKETKIVIRFWIIAVILAIISLSTLKIQ.

Transmembrane regions (helical) follow at residues leucine 31 to leucine 51, threonine 73 to leucine 93, isoleucine 98 to methionine 118, leucine 135 to isoleucine 155, glycine 177 to serine 197, glycine 209 to serine 229, valine 251 to alanine 271, valine 273 to leucine 293, isoleucine 298 to valine 318, and lysine 347 to leucine 367.

It belongs to the glycosyltransferase 4 family. MraY subfamily. Requires Mg(2+) as cofactor.

Its subcellular location is the cell inner membrane. The catalysed reaction is UDP-N-acetyl-alpha-D-muramoyl-L-alanyl-gamma-D-glutamyl-meso-2,6-diaminopimeloyl-D-alanyl-D-alanine + di-trans,octa-cis-undecaprenyl phosphate = di-trans,octa-cis-undecaprenyl diphospho-N-acetyl-alpha-D-muramoyl-L-alanyl-D-glutamyl-meso-2,6-diaminopimeloyl-D-alanyl-D-alanine + UMP. Its pathway is cell wall biogenesis; peptidoglycan biosynthesis. Catalyzes the initial step of the lipid cycle reactions in the biosynthesis of the cell wall peptidoglycan: transfers peptidoglycan precursor phospho-MurNAc-pentapeptide from UDP-MurNAc-pentapeptide onto the lipid carrier undecaprenyl phosphate, yielding undecaprenyl-pyrophosphoryl-MurNAc-pentapeptide, known as lipid I. The polypeptide is Phospho-N-acetylmuramoyl-pentapeptide-transferase (Leptospira borgpetersenii serovar Hardjo-bovis (strain JB197)).